A 979-amino-acid chain; its full sequence is UPF0182 protein Rv0064 (979 aa).

Helical transmembrane passes span 19 to 41 (LVTA…DIYV), 63 to 85 (LAIV…LLAY), 114 to 136 (LFGW…FDWV), 174 to 196 (WLFV…FGGL), 208 to 230 (AARV…AYWL), 261 to 280 (LVLV…AIFL), and 285 to 307 (IPAM…WPLL). The disordered stretch occupies residues 898 to 948 (GTGRVATARGGDAASAPPPGAGGPAPPQAVPPPRTTQPPAAPPRGPDVPPA). The span at 913–946 (APPPGAGGPAPPQAVPPPRTTQPPAAPPRGPDVP) shows a compositional bias: pro residues.

Belongs to the UPF0182 family.

Its subcellular location is the cell membrane. The polypeptide is UPF0182 protein Rv0064 (Mycobacterium tuberculosis (strain ATCC 25618 / H37Rv)).